We begin with the raw amino-acid sequence, 317 residues long: Cytochrome c biogenesis protein CcsA (317 aa).

The next 8 membrane-spanning stretches (helical) occupy residues 9 to 29 (ILTH…LITF), 46 to 63 (TATA…WVYS), 71 to 91 (LYES…IFDF), 98 to 118 (LSAI…SGFL), 143 to 163 (MVLG…LLVI), 225 to 245 (IISL…VWAN), 258 to 273 (ETWA…IYLH), and 286 to 306 (AIVA…VNLL).

The protein belongs to the CcmF/CycK/Ccl1/NrfE/CcsA family. In terms of assembly, may interact with Ccs1.

The protein localises to the plastid. The protein resides in the chloroplast thylakoid membrane. Required during biogenesis of c-type cytochromes (cytochrome c6 and cytochrome f) at the step of heme attachment. The chain is Cytochrome c biogenesis protein CcsA from Citrus sinensis (Sweet orange).